A 261-amino-acid polypeptide reads, in one-letter code: Fructoselysine 6-kinase (261 aa).

This sequence belongs to the carbohydrate kinase PfkB family. As to quaternary structure, monomer.

The catalysed reaction is N(6)-(D-fructosyl)-L-lysine + ATP = N(6)-(6-phospho-D-fructosyl)-L-lysine + ADP + H(+). The protein operates within carbohydrate metabolism; fructoselysine degradation; D-glucose 6-phosphate and lysine from fructoselysine: step 1/2. Its function is as follows. Catalyzes the ATP-dependent phosphorylation of fructoselysine to fructoselysine 6-phosphate. May function in a fructoselysine degradation pathway that allows S.flexneri to grow on fructoselysine or psicoselysine. The sequence is that of Fructoselysine 6-kinase (frlD) from Shigella flexneri.